A 180-amino-acid chain; its full sequence is 2-oxoglutarate dehydrogenase, mitochondrial (180 aa).

Lys-14 bears the N6-succinyllysine mark. Ser-40 carries the post-translational modification Phosphoserine. Arg-64 serves as a coordination point for thiamine diphosphate.

It belongs to the alpha-ketoglutarate dehydrogenase family. Homodimer. The 2-oxoglutarate dehydrogenase complex is composed of OGDH (2-oxoglutarate dehydrogenase; E1), DLST (dihydrolipoamide succinyltransferase; E2) and DLD (dihydrolipoamide dehydrogenase; E3). It contains multiple copies of the three enzymatic components (E1, E2 and E3). In the nucleus, the 2-oxoglutarate dehydrogenase complex associates with KAT2A. Interacts with ABHD11; this interaction maintains the functional lipoylation of the 2-oxoglutarate dehydrogenase complex. Thiamine diphosphate serves as cofactor. It depends on Mg(2+) as a cofactor.

It is found in the mitochondrion matrix. The protein localises to the nucleus. It catalyses the reaction N(6)-[(R)-lipoyl]-L-lysyl-[protein] + 2-oxoglutarate + H(+) = N(6)-[(R)-S(8)-succinyldihydrolipoyl]-L-lysyl-[protein] + CO2. Its activity is regulated as follows. Calcium ions and ADP stimulate, whereas ATP and NADH reduce catalytic activity. Its function is as follows. 2-oxoglutarate dehydrogenase (E1) component of the 2-oxoglutarate dehydrogenase complex (OGDHC), which mediates the decarboxylation of alpha-ketoglutarate. The 2-oxoglutarate dehydrogenase complex catalyzes the overall conversion of 2-oxoglutarate to succinyl-CoA and CO(2). The 2-oxoglutarate dehydrogenase complex is mainly active in the mitochondrion. A fraction of the 2-oxoglutarate dehydrogenase complex also localizes in the nucleus and is required for lysine succinylation of histones: associates with KAT2A on chromatin and provides succinyl-CoA to histone succinyltransferase KAT2A. This Mesocricetus auratus (Golden hamster) protein is 2-oxoglutarate dehydrogenase, mitochondrial.